The sequence spans 180 residues: Probable chorismate pyruvate-lyase (180 aa).

The substrate site is built by Arg-82, Leu-120, and Glu-165.

This sequence belongs to the UbiC family.

The protein resides in the cytoplasm. The enzyme catalyses chorismate = 4-hydroxybenzoate + pyruvate. Its pathway is cofactor biosynthesis; ubiquinone biosynthesis. Removes the pyruvyl group from chorismate, with concomitant aromatization of the ring, to provide 4-hydroxybenzoate (4HB) for the ubiquinone pathway. The chain is Probable chorismate pyruvate-lyase from Aliivibrio fischeri (strain ATCC 700601 / ES114) (Vibrio fischeri).